A 753-amino-acid polypeptide reads, in one-letter code: Catalase-peroxidase (753 aa).

The segment at residues 91–243 is a cross-link (tryptophyl-tyrosyl-methioninium (Trp-Tyr) (with M-269)); the sequence is WHSAGTYRIG…LGAVQMGLIY (153 aa). His92 (proton acceptor) is an active-site residue. Positions 243–269 form a cross-link, tryptophyl-tyrosyl-methioninium (Tyr-Met) (with W-91); it reads YVNPEGPDGNPDPLAAAHDIRETFARM. His284 serves as a coordination point for heme b.

It belongs to the peroxidase family. Peroxidase/catalase subfamily. As to quaternary structure, homodimer or homotetramer. Requires heme b as cofactor. Formation of the three residue Trp-Tyr-Met cross-link is important for the catalase, but not the peroxidase activity of the enzyme.

It carries out the reaction H2O2 + AH2 = A + 2 H2O. It catalyses the reaction 2 H2O2 = O2 + 2 H2O. Functionally, bifunctional enzyme with both catalase and broad-spectrum peroxidase activity. The chain is Catalase-peroxidase from Paraburkholderia xenovorans (strain LB400).